The chain runs to 207 residues: NADH-quinone oxidoreductase subunit C (207 aa).

The protein belongs to the complex I 30 kDa subunit family. In terms of assembly, NDH-1 is composed of 14 different subunits. Subunits NuoB, C, D, E, F, and G constitute the peripheral sector of the complex.

The protein resides in the cell inner membrane. The catalysed reaction is a quinone + NADH + 5 H(+)(in) = a quinol + NAD(+) + 4 H(+)(out). In terms of biological role, NDH-1 shuttles electrons from NADH, via FMN and iron-sulfur (Fe-S) centers, to quinones in the respiratory chain. The immediate electron acceptor for the enzyme in this species is believed to be ubiquinone. Couples the redox reaction to proton translocation (for every two electrons transferred, four hydrogen ions are translocated across the cytoplasmic membrane), and thus conserves the redox energy in a proton gradient. The sequence is that of NADH-quinone oxidoreductase subunit C from Bordetella pertussis (strain Tohama I / ATCC BAA-589 / NCTC 13251).